The sequence spans 294 residues: Taste receptor type 2 member 143 (294 aa).

Topologically, residues 1–7 (MPSTPTL) are extracellular. A helical transmembrane segment spans residues 8–28 (IFIVIFFLVSVASMLQNGFMI). Over 29–43 (IVLGREWMRNRALPA) the chain is Cytoplasmic. The chain crosses the membrane as a helical span at residues 44–64 (VDMIVASLASSRFCLHGIAIL). Topologically, residues 65 to 80 (NNFLASFDFCYQANFV) are extracellular. Residues 81–101 (GILWDFINTLILWLTAWLAIF) form a helical membrane-spanning segment. The Cytoplasmic portion of the chain corresponds to 102 to 128 (YCVKISSFSHPVLFWLKWRISQLVPRL). A helical transmembrane segment spans residues 129–149 (LLVSLIMGGLSAIISATGNII). Topologically, residues 150 to 180 (ANQMIISQGFHGNCTFGHMSLDFYRYYYLSH) are extracellular. N-linked (GlcNAc...) asparagine glycosylation occurs at Asn-162. The helical transmembrane segment at 181-201 (AVLMWFTPFFLFLVSIIFLMF) threads the bilayer. The Cytoplasmic portion of the chain corresponds to 202-227 (SLYRHVEKMRGHRPGPWDPRTQAHTM). A helical membrane pass occupies residues 228–248 (ALKSLTVFITFYILFFLALII). Residues 249 to 260 (SSTKSKTMHSYW) are Extracellular-facing. A helical membrane pass occupies residues 261–281 (YWVREIIIYTGIFLNSIILVL). The Cytoplasmic segment spans residues 282–294 (SNPKLRKALKMRF).

The protein belongs to the G-protein coupled receptor T2R family.

It is found in the membrane. Functionally, putative taste receptor which may play a role in the perception of bitterness. This Rattus norvegicus (Rat) protein is Taste receptor type 2 member 143.